A 323-amino-acid polypeptide reads, in one-letter code: Malate dehydrogenase (323 aa).

NAD(+) is bound at residue 11–17; sequence GAAGQIA. Positions 92 and 98 each coordinate substrate. NAD(+) contacts are provided by residues Asn-105, Gln-112, and 129 to 131; that span reads VGN. Residues Asn-131 and Arg-162 each coordinate substrate. The active-site Proton acceptor is His-187.

This sequence belongs to the LDH/MDH superfamily. MDH type 2 family.

It catalyses the reaction (S)-malate + NAD(+) = oxaloacetate + NADH + H(+). Its function is as follows. Catalyzes the reversible oxidation of malate to oxaloacetate. The sequence is that of Malate dehydrogenase from Corynebacterium efficiens (strain DSM 44549 / YS-314 / AJ 12310 / JCM 11189 / NBRC 100395).